A 122-amino-acid polypeptide reads, in one-letter code: Large ribosomal subunit protein uL18 (122 aa).

This sequence belongs to the universal ribosomal protein uL18 family. As to quaternary structure, part of the 50S ribosomal subunit; part of the 5S rRNA/L5/L18/L25 subcomplex. Contacts the 5S and 23S rRNAs.

This is one of the proteins that bind and probably mediate the attachment of the 5S RNA into the large ribosomal subunit, where it forms part of the central protuberance. This chain is Large ribosomal subunit protein uL18, found in Mycobacterium tuberculosis (strain ATCC 25177 / H37Ra).